The following is a 94-amino-acid chain: MDLRVIDKSDTELSIEIAGEDHTFMNVIKGALLETEGVTAATYDVNPEQSGGQTDPVLTIKTEEGVDALEALEDGTDAVIEKADNFTDAFEAAA.

It belongs to the archaeal Rpo11/eukaryotic RPB11/RPC19 RNA polymerase subunit family. Part of the RNA polymerase complex.

The protein localises to the cytoplasm. It carries out the reaction RNA(n) + a ribonucleoside 5'-triphosphate = RNA(n+1) + diphosphate. Its function is as follows. DNA-dependent RNA polymerase (RNAP) catalyzes the transcription of DNA into RNA using the four ribonucleoside triphosphates as substrates. The protein is DNA-directed RNA polymerase subunit Rpo11 of Haloarcula marismortui (strain ATCC 43049 / DSM 3752 / JCM 8966 / VKM B-1809) (Halobacterium marismortui).